Here is a 313-residue protein sequence, read N- to C-terminus: Interferon-inducible double-stranded RNA-dependent protein kinase activator A (313 aa).

The segment covering 1–18 has biased composition (basic and acidic residues); the sequence is MSQSRHRAEAPPLEREDS. The disordered stretch occupies residues 1 to 21; it reads MSQSRHRAEAPPLEREDSGTF. Sufficient for self-association and interaction with TARBP2 regions lie at residues 1–103, 102–195, and 195–313; these read MSQS…KANA, NASI…FSNI, and ISPE…AERK. Phosphoserine is present on serine 18. DRBM domains are found at residues 34-101, 126-194, and 240-308; these read TPIQ…ILKA, NPIG…KFSN, and DYIQ…YLKI. Phosphoserine occurs at positions 167, 246, and 287.

It belongs to the PRKRA family. In terms of assembly, homodimer. Interacts with EIF2AK2/PKR through its DRBM domains. Interacts with DICER1, AGO2 and TARBP2. Also able to interact with dsRNA. Interacts with UBC9. Forms a complex with UBC9 and p53/TP53. Interacts with DUS2L (via DRBM domain). Interacts with RIGI. As to quaternary structure, (Microbial infection) Interacts with ebolavirus protein VP35; this interaction inhibits the interaction between RIGI and PRKRA. In addition, this interaction disrupts the interaction between VP35 and the viral polymerase L. So the VP35-PRKRA interaction plays a critical role in determining the outcome of ebolavirus infection. The interaction PRKRA-VP35 also prevents PRKRA binding to DICER1 and thus allows the virus to counteract host RNA silencing. (Microbial infection) Interacts with human herpesvirus 8 protein MTA/ORF57; this interaction inhibits stress granule formation. Phosphorylated at Ser-246 in unstressed cells and at Ser-287 in stressed cells. Phosphorylation at Ser-246 appears to be a prerequisite for subsequent phosphorylation at Ser-287. Phosphorylation at Ser-246 and Ser-287 are necessary for activation of EIF2AK2/PKR under conditions of stress.

Its subcellular location is the cytoplasm. The protein localises to the perinuclear region. Functionally, activates EIF2AK2/PKR in the absence of double-stranded RNA (dsRNA), leading to phosphorylation of EIF2S1/EFI2-alpha and inhibition of translation and induction of apoptosis. Required for siRNA production by DICER1 and for subsequent siRNA-mediated post-transcriptional gene silencing. Does not seem to be required for processing of pre-miRNA to miRNA by DICER1. Promotes UBC9-p53/TP53 association and sumoylation and phosphorylation of p53/TP53 at 'Lys-386' at 'Ser-392' respectively and enhances its activity in a EIF2AK2/PKR-dependent manner. This Homo sapiens (Human) protein is Interferon-inducible double-stranded RNA-dependent protein kinase activator A (PRKRA).